Here is a 362-residue protein sequence, read N- to C-terminus: Chorismate synthase (362 aa).

Arginine 47 lines the NADP(+) pocket. Residues arginine 124–serine 126, glycine 286, lysine 301–threonine 305, and arginine 327 contribute to the FMN site.

Belongs to the chorismate synthase family. In terms of assembly, homotetramer. It depends on FMNH2 as a cofactor.

The catalysed reaction is 5-O-(1-carboxyvinyl)-3-phosphoshikimate = chorismate + phosphate. It functions in the pathway metabolic intermediate biosynthesis; chorismate biosynthesis; chorismate from D-erythrose 4-phosphate and phosphoenolpyruvate: step 7/7. Its function is as follows. Catalyzes the anti-1,4-elimination of the C-3 phosphate and the C-6 proR hydrogen from 5-enolpyruvylshikimate-3-phosphate (EPSP) to yield chorismate, which is the branch point compound that serves as the starting substrate for the three terminal pathways of aromatic amino acid biosynthesis. This reaction introduces a second double bond into the aromatic ring system. This chain is Chorismate synthase, found in Trichormus variabilis (strain ATCC 29413 / PCC 7937) (Anabaena variabilis).